The following is a 215-amino-acid chain: Urease accessory protein UreF (215 aa).

This sequence belongs to the UreF family. As to quaternary structure, ureD, UreF and UreG form a complex that acts as a GTP-hydrolysis-dependent molecular chaperone, activating the urease apoprotein by helping to assemble the nickel containing metallocenter of UreC. The UreE protein probably delivers the nickel.

The protein localises to the cytoplasm. In terms of biological role, required for maturation of urease via the functional incorporation of the urease nickel metallocenter. The polypeptide is Urease accessory protein UreF (Paracoccus denitrificans (strain Pd 1222)).